A 338-amino-acid chain; its full sequence is UDP-3-O-acylglucosamine N-acyltransferase (338 aa).

The Proton acceptor role is filled by histidine 239.

This sequence belongs to the transferase hexapeptide repeat family. LpxD subfamily. In terms of assembly, homotrimer.

It catalyses the reaction a UDP-3-O-[(3R)-3-hydroxyacyl]-alpha-D-glucosamine + a (3R)-hydroxyacyl-[ACP] = a UDP-2-N,3-O-bis[(3R)-3-hydroxyacyl]-alpha-D-glucosamine + holo-[ACP] + H(+). The protein operates within bacterial outer membrane biogenesis; LPS lipid A biosynthesis. In terms of biological role, catalyzes the N-acylation of UDP-3-O-acylglucosamine using 3-hydroxyacyl-ACP as the acyl donor. Is involved in the biosynthesis of lipid A, a phosphorylated glycolipid that anchors the lipopolysaccharide to the outer membrane of the cell. In Xylella fastidiosa (strain M23), this protein is UDP-3-O-acylglucosamine N-acyltransferase.